The chain runs to 85 residues: Large ribosomal subunit protein bL27 (85 aa).

The interval 1 to 21 is disordered; it reads MAHKKAGGSTRNGRDSEGKRL.

It belongs to the bacterial ribosomal protein bL27 family.

This Hamiltonella defensa subsp. Acyrthosiphon pisum (strain 5AT) protein is Large ribosomal subunit protein bL27.